The sequence spans 146 residues: Large ribosomal subunit protein uL15 (146 aa).

Residues 1–13 show a composition bias toward basic and acidic residues; it reads MKLHELKPAEGSR. The tract at residues 1–59 is disordered; that stretch reads MKLHELKPAEGSRKVRNRVGRGTSSGNGKTSGRGQKGQKARSGGGVRLGFEGGQTPLFR. 2 stretches are compositionally biased toward gly residues: residues 23–35 and 42–52; these read TSSG…GRGQ and SGGGVRLGFEG.

Belongs to the universal ribosomal protein uL15 family. Part of the 50S ribosomal subunit.

In terms of biological role, binds to the 23S rRNA. The polypeptide is Large ribosomal subunit protein uL15 (Streptococcus agalactiae serotype Ia (strain ATCC 27591 / A909 / CDC SS700)).